The chain runs to 271 residues: Phosphatidylglycerol--prolipoprotein diacylglyceryl transferase (271 aa).

The next 7 membrane-spanning stretches (helical) occupy residues 25 to 45 (WYGI…KFFV), 60 to 80 (YFIW…ILIY), 103 to 123 (FVGI…IATL), 134 to 154 (WIFL…GRIG), 181 to 201 (PSQL…VYLA), 209 to 229 (GELI…CEFY), and 235 to 255 (GIGF…IMFI). R152 is a binding site for a 1,2-diacyl-sn-glycero-3-phospho-(1'-sn-glycerol).

This sequence belongs to the Lgt family.

It is found in the cell inner membrane. The enzyme catalyses L-cysteinyl-[prolipoprotein] + a 1,2-diacyl-sn-glycero-3-phospho-(1'-sn-glycerol) = an S-1,2-diacyl-sn-glyceryl-L-cysteinyl-[prolipoprotein] + sn-glycerol 1-phosphate + H(+). It participates in protein modification; lipoprotein biosynthesis (diacylglyceryl transfer). Catalyzes the transfer of the diacylglyceryl group from phosphatidylglycerol to the sulfhydryl group of the N-terminal cysteine of a prolipoprotein, the first step in the formation of mature lipoproteins. The sequence is that of Phosphatidylglycerol--prolipoprotein diacylglyceryl transferase from Campylobacter jejuni subsp. jejuni serotype O:6 (strain 81116 / NCTC 11828).